We begin with the raw amino-acid sequence, 54 residues long: Ribulose bisphosphate carboxylase large chain (54 aa).

A propeptide spanning residues 1-2 is cleaved from the precursor; sequence MS. At proline 3 the chain carries N-acetylproline. Lysine 14 carries the N6,N6,N6-trimethyllysine modification.

It belongs to the RuBisCO large chain family. Type I subfamily. As to quaternary structure, heterohexadecamer of 8 large chains and 8 small chains.

It is found in the plastid. The protein resides in the chloroplast. The catalysed reaction is 2 (2R)-3-phosphoglycerate + 2 H(+) = D-ribulose 1,5-bisphosphate + CO2 + H2O. The enzyme catalyses D-ribulose 1,5-bisphosphate + O2 = 2-phosphoglycolate + (2R)-3-phosphoglycerate + 2 H(+). Its function is as follows. RuBisCO catalyzes two reactions: the carboxylation of D-ribulose 1,5-bisphosphate, the primary event in carbon dioxide fixation, as well as the oxidative fragmentation of the pentose substrate in the photorespiration process. Both reactions occur simultaneously and in competition at the same active site. In Colletia hystrix (Crucifixion thorn), this protein is Ribulose bisphosphate carboxylase large chain (rbcL).